Reading from the N-terminus, the 261-residue chain is tRNA (guanine-N(1)-)-methyltransferase (261 aa).

S-adenosyl-L-methionine is bound by residues Gly-113 and 133-138; that span reads IGDYVL.

Belongs to the RNA methyltransferase TrmD family. Homodimer.

It is found in the cytoplasm. The enzyme catalyses guanosine(37) in tRNA + S-adenosyl-L-methionine = N(1)-methylguanosine(37) in tRNA + S-adenosyl-L-homocysteine + H(+). In terms of biological role, specifically methylates guanosine-37 in various tRNAs. The protein is tRNA (guanine-N(1)-)-methyltransferase of Xylella fastidiosa (strain M23).